A 210-amino-acid chain; its full sequence is Kinetochore protein Spc25 (210 aa).

Positions 42-106 (TMENIKRQQH…KKKQERDKLI (65 aa)) form a coiled coil.

It belongs to the SPC25 family. As to quaternary structure, component of the Ndc80 complex, which is composed of Ndc80, Nuf2 and Spc25.

It is found in the nucleus. It localises to the chromosome. The protein localises to the centromere. Its subcellular location is the kinetochore. In terms of biological role, acts as a component of the essential kinetochore-associated Ndc80 complex, which is required for chromosome segregation and spindle checkpoint activity during meiosis and mitosis. Required for kinetochore integrity and the organization of stable microtubule binding sites in the outer plate of the kinetochore. Participates in SAC signaling that responds specifically to disruptions in spindle microtubule dynamics. The NDC80 complex synergistically enhances the affinity of the SKA1 complex for microtubules and may allow the NDC80 complex to track depolymerizing microtubules. The polypeptide is Kinetochore protein Spc25 (Drosophila virilis (Fruit fly)).